A 234-amino-acid polypeptide reads, in one-letter code: Leucyl/phenylalanyl-tRNA--protein transferase (234 aa).

It belongs to the L/F-transferase family.

It localises to the cytoplasm. It carries out the reaction N-terminal L-lysyl-[protein] + L-leucyl-tRNA(Leu) = N-terminal L-leucyl-L-lysyl-[protein] + tRNA(Leu) + H(+). The enzyme catalyses N-terminal L-arginyl-[protein] + L-leucyl-tRNA(Leu) = N-terminal L-leucyl-L-arginyl-[protein] + tRNA(Leu) + H(+). It catalyses the reaction L-phenylalanyl-tRNA(Phe) + an N-terminal L-alpha-aminoacyl-[protein] = an N-terminal L-phenylalanyl-L-alpha-aminoacyl-[protein] + tRNA(Phe). Its function is as follows. Functions in the N-end rule pathway of protein degradation where it conjugates Leu, Phe and, less efficiently, Met from aminoacyl-tRNAs to the N-termini of proteins containing an N-terminal arginine or lysine. This is Leucyl/phenylalanyl-tRNA--protein transferase from Dechloromonas aromatica (strain RCB).